The following is a 477-amino-acid chain: Delayed-rectifier potassium channel regulatory subunit KCNS2 (477 aa).

Residues 1 to 184 (MTRQSLWDLS…LALDNPGYSV (184 aa)) are Cytoplasmic-facing. Residues 185 to 206 (LSRVFSVLSILVVLGSIITMCL) form a helical membrane-spanning segment. Topologically, residues 207–225 (NSLPDFQIPDSQGNPGEDP) are extracellular. Residues 226–248 (RFEIVEHFGIAWFTFELVARFAV) traverse the membrane as a helical segment. Residues 249-259 (APDFLKFFKNA) lie on the Cytoplasmic side of the membrane. The chain crosses the membrane as a helical span at residues 260–280 (LNLIDLMSIVPFYITLVVNLV). The Extracellular segment spans residues 281–290 (VESSPTLANL). Residues 291–311 (GRVAQVLRLMRIFRILKLARH) traverse the membrane as a helical; Voltage-sensor segment. The Cytoplasmic portion of the chain corresponds to 312–326 (STGLRSLGATLKYSY). A helical transmembrane segment spans residues 327-348 (KEVGLLLLYLSVGISIFSVVAY). The Extracellular portion of the chain corresponds to 349 to 361 (TIEKEENEGLATI). The helical intramembrane region spans 362 to 373 (PACWWWATVSMT). The short motif at 374–379 (TVGYGD) is the Selectivity filter element. An intramembrane segment occupies 374-381 (TVGYGDVV). The Extracellular segment spans residues 382 to 388 (PGTTAGK). A helical membrane pass occupies residues 389–417 (LTASACILAGILVVVLPITLIFNKFSHFY). Over 418 to 477 (RRQKQLESAMRSCDFGDGMKEVPSVNLRDYYAHKVKSLMASLTNMSRSSPSELSLDDSLH) the chain is Cytoplasmic.

The protein belongs to the potassium channel family. S (TC 1.A.1.2) subfamily. Kv9.2/KCNS2 sub-subfamily. As to quaternary structure, heterotetramer with KCNB1 and KCNB2. Does not form homomultimers. Detected in brain, lung and in pulmonary arteries.

It is found in the cell membrane. In terms of biological role, potassium channel regulatory subunit that modulate the delayed rectifier voltage-gated potassium channel activity of KCNB1 and KCNB2 by altering their kinetics, expression levels, and shifting the half-inactivation potential to more polarized values. While it does not form functional channels on its own, it can form functional heterotetrameric channels with KCNB1 and KCNB2. Each regulatory subunit has unique regulatory properties that can lead to extensive inhibition, significant changes in kinetics, and/or substantial shifts in the voltage dependencies of the inactivation process. This chain is Delayed-rectifier potassium channel regulatory subunit KCNS2, found in Rattus norvegicus (Rat).